Here is a 709-residue protein sequence, read N- to C-terminus: Tyrosine-protein phosphatase cdc-14 (709 aa).

Residues 196-354 enclose the Tyrosine-protein phosphatase domain; the sequence is DFNWIIPGKI…QKFCWSLSQS (159 aa). Cysteine 295 acts as the Phosphocysteine intermediate in catalysis. The Nuclear localization signal motif lies at 366-371; that stretch reads KRNVRR. A Nuclear export signal motif is present at residues 372–381; it reads LVNQVDDINL. Disordered regions lie at residues 403 to 541, 573 to 594, and 628 to 661; these read VQVQ…LTRT, RYLSPTTPIKPMSPSYTDGTSP, and ESKPPKRILSMPGTSKSTSSLKKIQVSRPRPYPS. The span at 404-413 shows a compositional bias: polar residues; the sequence is QVQNGRSTAP. Residues 463-479 show a composition bias toward low complexity; that stretch reads TTSPNSSSSRRFVKSST. Polar residues-rich tracts occupy residues 480 to 490 and 501 to 521; these read PQMTVPSQAYL and PSKNGTSSGTSSRQLKTTPNG. A compositionally biased stretch (low complexity) spans 526–541; that stretch reads RTRNSSGNTTSTLTRT. Residues 639–649 are compositionally biased toward polar residues; the sequence is PGTSKSTSSLK.

It belongs to the protein-tyrosine phosphatase family. Non-receptor class CDC14 subfamily.

The protein localises to the cytoplasm. The protein resides in the cytoskeleton. It is found in the microtubule organizing center. Its subcellular location is the centrosome. It localises to the spindle. The protein localises to the midbody. The protein resides in the nucleus. It carries out the reaction O-phospho-L-tyrosyl-[protein] + H2O = L-tyrosyl-[protein] + phosphate. Inhibited by sodium orthovanadate. Weakly inhibited by sodium fluoride and okadaic acid. Functionally, protein phosphatase that negatively regulates the G1-to-S phase transition to inhibit the cell cycle and establish quiescence in cells of multiple lineages including vulval, hypodermal and intestinal. Promotes nuclear accumulation and activity of the cyclin-dependent kinase inhibitor cki-1 which leads to inhibition of G1 progression during vulval tissue development. Has been shown to not be required for cytokinesis. However, in the embryo, in a contrasting study, has been shown to act as a regulator of central spindle formation and cytokinesis, and may be required for localization of the spindle component zen-4, and its interacting partner air-2 at the spindle during late cell divisions. In terms of biological role, main regulator of cell cycle arrest in vulval precursor cells. This Caenorhabditis elegans protein is Tyrosine-protein phosphatase cdc-14.